A 252-amino-acid chain; its full sequence is Putative zinc finger CCCH domain-containing protein 58 (252 aa).

Residues 35–62 (NHKSVLCMKWREGRCHNGVACRYAHGEE) form a C3H1-type zinc finger. Disordered stretches follow at residues 71-95 (RVGGGGTSMHARSSPPRDGASSGST), 109-180 (RHGR…SAAD), and 215-252 (TATSEPSATSDDDAITTTTSSSTTDADELDAAVAAPPK). Low complexity-rich tracts occupy residues 133–149 (SARSTAPTPPRAHTTPP) and 229–238 (ITTTTSSSTT).

This chain is Putative zinc finger CCCH domain-containing protein 58, found in Oryza sativa subsp. japonica (Rice).